A 65-amino-acid chain; its full sequence is UPF0370 protein Ent638_2968 (65 aa).

Residues 4–24 (LSKYWWILVLVFLVGVLLNVI) form a helical membrane-spanning segment. The segment at 39–65 (KPELPPHRDFNDKWDDDDNWPKKDQKK) is disordered. A compositionally biased stretch (basic and acidic residues) spans 42-65 (LPPHRDFNDKWDDDDNWPKKDQKK).

Belongs to the UPF0370 family.

Its subcellular location is the cell membrane. This chain is UPF0370 protein Ent638_2968, found in Enterobacter sp. (strain 638).